Consider the following 503-residue polypeptide: Trehalose-6-phosphate synthase (503 aa).

Residue Arg22 participates in D-glucose 6-phosphate binding. 42 to 43 provides a ligand contact to UDP-alpha-D-glucose; the sequence is GG. The D-glucose 6-phosphate site is built by Tyr94 and Asp148. The UDP-alpha-D-glucose site is built by Arg290 and Lys295. Arg328 lines the D-glucose 6-phosphate pocket. 393–397 lines the UDP-alpha-D-glucose pocket; sequence LVAKE. Positions 481–503 are disordered; the sequence is GETGDSGVTGESTPAPESDSGSF.

Belongs to the glycosyltransferase 20 family. As to quaternary structure, homotetramer.

The catalysed reaction is ADP-alpha-D-glucose + D-glucose 6-phosphate = alpha,alpha-trehalose 6-phosphate + ADP + H(+). The enzyme catalyses CDP-alpha-D-glucose + D-glucose 6-phosphate = alpha,alpha-trehalose 6-phosphate + CDP + H(+). It carries out the reaction GDP-alpha-D-glucose + D-glucose 6-phosphate = alpha,alpha-trehalose 6-phosphate + GDP + H(+). It catalyses the reaction TDP-alpha-D-glucose + D-glucose 6-phosphate = 5-methyl-UDP + alpha,alpha-trehalose 6-phosphate + H(+). The catalysed reaction is D-glucose 6-phosphate + UDP-alpha-D-glucose = alpha,alpha-trehalose 6-phosphate + UDP + H(+). The protein operates within glycan biosynthesis; trehalose biosynthesis. Its activity is regulated as follows. Stimulated by the polynucleotide FII (physiological activator), and by chondroitin sulfate (CS) and heparin. Activation by the polyanion is inhibited by high salt concentration as well as by high concentrations of mononucleoside phosphates. In terms of biological role, involved in the production of glycogen and alpha-glucan via the TreS-Pep2 branch involved in the biosynthesis of maltose-1-phosphate (M1P), and probably in the osmoprotection via the biosynthesis of trehalose. Catalyzes the transfer of glucose from UDP-glucose (UDP-Glc) to glucose-6-phosphate (Glc-6-P) to form trehalose-6-phosphate. ADP-Glc, CDP-Glc, GDP-Glc and TDP-Glc are also glucosyl donors, however, when the pyrimidine sugar nucleotides (CDP-Glc, TDP-Glc and UDP-Glc) are used as substrates, there is an absolute requirement for a high molecular weight polyanion for activity. This chain is Trehalose-6-phosphate synthase, found in Mycolicibacterium smegmatis (strain ATCC 700084 / mc(2)155) (Mycobacterium smegmatis).